The chain runs to 530 residues: Bifunctional purine biosynthesis protein PurH (530 aa).

Residues 1–147 (MPSIKRALIS…KNWKHVAIVT (147 aa)) form the MGS-like domain.

It belongs to the PurH family.

The enzyme catalyses (6R)-10-formyltetrahydrofolate + 5-amino-1-(5-phospho-beta-D-ribosyl)imidazole-4-carboxamide = 5-formamido-1-(5-phospho-D-ribosyl)imidazole-4-carboxamide + (6S)-5,6,7,8-tetrahydrofolate. The catalysed reaction is IMP + H2O = 5-formamido-1-(5-phospho-D-ribosyl)imidazole-4-carboxamide. Its pathway is purine metabolism; IMP biosynthesis via de novo pathway; 5-formamido-1-(5-phospho-D-ribosyl)imidazole-4-carboxamide from 5-amino-1-(5-phospho-D-ribosyl)imidazole-4-carboxamide (10-formyl THF route): step 1/1. It functions in the pathway purine metabolism; IMP biosynthesis via de novo pathway; IMP from 5-formamido-1-(5-phospho-D-ribosyl)imidazole-4-carboxamide: step 1/1. This Neisseria meningitidis serogroup A / serotype 4A (strain DSM 15465 / Z2491) protein is Bifunctional purine biosynthesis protein PurH.